The following is a 241-amino-acid chain: Purine nucleoside phosphorylase DeoD-type 1 (241 aa).

A purine D-ribonucleoside is bound at residue histidine 5. Phosphate-binding positions include glycine 21, arginine 25, arginine 44, and 88–91 (RVGS). A purine D-ribonucleoside contacts are provided by residues 180–182 (EME) and 204–205 (SD). The active-site Proton donor is aspartate 205.

It belongs to the PNP/UDP phosphorylase family. In terms of assembly, homohexamer; trimer of homodimers.

It catalyses the reaction a purine D-ribonucleoside + phosphate = a purine nucleobase + alpha-D-ribose 1-phosphate. The catalysed reaction is a purine 2'-deoxy-D-ribonucleoside + phosphate = a purine nucleobase + 2-deoxy-alpha-D-ribose 1-phosphate. Functionally, catalyzes the reversible phosphorolytic breakdown of the N-glycosidic bond in the beta-(deoxy)ribonucleoside molecules, with the formation of the corresponding free purine bases and pentose-1-phosphate. The chain is Purine nucleoside phosphorylase DeoD-type 1 from Photobacterium profundum (strain SS9).